Consider the following 243-residue polypeptide: VQ motif-containing protein 33 (243 aa).

Residues 1-16 (MEVSTSSMSSKPEQMQ) show a composition bias toward polar residues. The disordered stretch occupies residues 1 to 49 (MEVSTSSMSSKPEQMQNPPPMISSPRFQPQIISPHHHDQHQHLSNPYPT). A VQ motif is present at residues 59–68 (FKQVVQMLTG). 2 disordered regions span residues 69–98 (SSTD…SIPP) and 138–162 (FTGG…SENI). S83 and S95 each carry phosphoserine. Residues 84–98 (PVNNNNKGSSFSIPP) are compositionally biased toward polar residues. T139 carries the phosphothreonine modification. Phosphoserine is present on residues S148, S152, S165, S167, and S178. Over residues 149 to 162 (PRFSPRNSSSSENI) the composition is skewed to low complexity. Positions 180–243 (VTPLRSNDDP…FPVASPARNS (64 aa)) are disordered. T181 carries the phosphothreonine modification. Positions 191–201 (NKSSPLSLGNS) are enriched in polar residues. Residues S218 and S221 each carry the phosphoserine modification. Position 222 is a phosphothreonine (T222). The residue at position 238 (S238) is a Phosphoserine.

Post-translationally, phosphorylated on serine and threonine residues by MPK6.

It is found in the nucleus. Functionally, may modulate WRKY transcription factor activities. The protein is VQ motif-containing protein 33 of Arabidopsis thaliana (Mouse-ear cress).